Here is a 383-residue protein sequence, read N- to C-terminus: Sulfate adenylyltransferase (383 aa).

The protein belongs to the sulfate adenylyltransferase family.

The catalysed reaction is sulfate + ATP + H(+) = adenosine 5'-phosphosulfate + diphosphate. The protein operates within sulfur metabolism; hydrogen sulfide biosynthesis; sulfite from sulfate: step 1/3. This is Sulfate adenylyltransferase (sat) from Aeropyrum pernix (strain ATCC 700893 / DSM 11879 / JCM 9820 / NBRC 100138 / K1).